Consider the following 314-residue polypeptide: Aspartate carbamoyltransferase catalytic subunit (314 aa).

Carbamoyl phosphate-binding residues include arginine 64 and threonine 65. Residue lysine 92 participates in L-aspartate binding. Residues arginine 114, histidine 142, and glutamine 145 each contribute to the carbamoyl phosphate site. Positions 175 and 230 each coordinate L-aspartate. Glycine 271 and proline 272 together coordinate carbamoyl phosphate.

It belongs to the aspartate/ornithine carbamoyltransferase superfamily. ATCase family. In terms of assembly, heterododecamer (2C3:3R2) of six catalytic PyrB chains organized as two trimers (C3), and six regulatory PyrI chains organized as three dimers (R2).

It catalyses the reaction carbamoyl phosphate + L-aspartate = N-carbamoyl-L-aspartate + phosphate + H(+). It participates in pyrimidine metabolism; UMP biosynthesis via de novo pathway; (S)-dihydroorotate from bicarbonate: step 2/3. Functionally, catalyzes the condensation of carbamoyl phosphate and aspartate to form carbamoyl aspartate and inorganic phosphate, the committed step in the de novo pyrimidine nucleotide biosynthesis pathway. The polypeptide is Aspartate carbamoyltransferase catalytic subunit (Deinococcus radiodurans (strain ATCC 13939 / DSM 20539 / JCM 16871 / CCUG 27074 / LMG 4051 / NBRC 15346 / NCIMB 9279 / VKM B-1422 / R1)).